The chain runs to 4363 residues: AM-toxin synthetase AMT1 (4363 aa).

Residues A278–D670 form an adenylation 1 region. The region spanning A810–P887 is the Carrier 1 domain. The residue at position 847 (S847) is an O-(pantetheine 4'-phosphoryl)serine. A condensation 1 region spans residues E926–S1340. The interval K1368–I1765 is adenylation 2. A Carrier 2 domain is found at P1884–T1961. At S1922 the chain carries O-(pantetheine 4'-phosphoryl)serine. A condensation 2 region spans residues E1999–S2410. Positions R2448 to R2853 are adenylation 3. Positions L2977–R3053 constitute a Carrier 3 domain. O-(pantetheine 4'-phosphoryl)serine is present on S3014. A condensation 3 region spans residues V3098–N3503. One can recognise a Carrier 4 domain in the interval P3730–T3806. An O-(pantetheine 4'-phosphoryl)serine modification is found at S3767. Residues Q3850–A4204 are condensation 4.

The protein belongs to the NRP synthetase family.

Its pathway is mycotoxin biosynthesis. Its function is as follows. Nonribosomal peptide synthetase; part of the gene clusters that mediate the biosynthesis of AM-toxins, host-selective toxins (HSTs) causing Alternaria blotch on apple, a worldwide distributed disease. AM-toxins are cyclic depsipeptides containing the 3 residues 2-hydroxy-isovaleric acid (2-HIV), dehydroalanine, L-alanine which are common for all 3 AM-toxins I to III. The fourth precursor is L-alpha-amino-methoxyphenyl-valeric acid (L-Amv) for AM-toxin I, L-alpha-amino-phenyl-valeric acid (L-Apv) for AM-toxin II, and L-alpha-amino-hydroxyphenyl-valeric acid (L-Ahv) for AM-toxin III. AM-toxins have two target sites for affecting susceptible apple cells; they cause invagination of the plasma membrane and electrolyte loss, and chloroplast disorganization. The non-ribosomal peptide synthetase AMT1 contains 4 catalytic modules and is responsible for activation of each residue in AM-toxin. The aldo-keto reductase AMT2 catalyzes the conversion of 2-keto-isovaleric acid (2-KIV) to 2-hydroxy-isovaleric acid (2-HIV), one of the precursor residues incorporated by AMT1 during AM-toxin biosynthesis, by reduction of its ketone to an alcohol. The cytochrome P450 monooxygenase AMT3 and the thioesterase AMT4 are also important for AM-toxin production, but their exact function within the AM-toxin biosynthesis are not known yet. Up to 21 proteins (including AMT1 to AMT4) are predicted to be involved in AM-toxin biosynthesis since their expression ishighly up-regulated in AM-toxin-producing cultures. The protein is AM-toxin synthetase AMT1 of Alternaria alternata (Alternaria rot fungus).